Consider the following 138-residue polypeptide: Large ribosomal subunit protein bL19 (138 aa).

Belongs to the bacterial ribosomal protein bL19 family.

In terms of biological role, this protein is located at the 30S-50S ribosomal subunit interface and may play a role in the structure and function of the aminoacyl-tRNA binding site. The protein is Large ribosomal subunit protein bL19 of Rickettsia massiliae (strain Mtu5).